We begin with the raw amino-acid sequence, 387 residues long: Large ribosomal subunit protein uL3 (387 aa).

Belongs to the universal ribosomal protein uL3 family.

It is found in the cytoplasm. This chain is Large ribosomal subunit protein uL3 (RPL3), found in Eremothecium gossypii (strain ATCC 10895 / CBS 109.51 / FGSC 9923 / NRRL Y-1056) (Yeast).